The sequence spans 273 residues: Bis(5'-nucleosyl)-tetraphosphatase, symmetrical (273 aa).

It belongs to the Ap4A hydrolase family.

The catalysed reaction is P(1),P(4)-bis(5'-adenosyl) tetraphosphate + H2O = 2 ADP + 2 H(+). Hydrolyzes diadenosine 5',5'''-P1,P4-tetraphosphate to yield ADP. This Aromatoleum aromaticum (strain DSM 19018 / LMG 30748 / EbN1) (Azoarcus sp. (strain EbN1)) protein is Bis(5'-nucleosyl)-tetraphosphatase, symmetrical.